The primary structure comprises 351 residues: Nicotinate-nucleotide--dimethylbenzimidazole phosphoribosyltransferase (351 aa).

Glu-317 functions as the Proton acceptor in the catalytic mechanism.

It belongs to the CobT family.

It carries out the reaction 5,6-dimethylbenzimidazole + nicotinate beta-D-ribonucleotide = alpha-ribazole 5'-phosphate + nicotinate + H(+). The protein operates within nucleoside biosynthesis; alpha-ribazole biosynthesis; alpha-ribazole from 5,6-dimethylbenzimidazole: step 1/2. Functionally, catalyzes the synthesis of alpha-ribazole-5'-phosphate from nicotinate mononucleotide (NAMN) and 5,6-dimethylbenzimidazole (DMB). This is Nicotinate-nucleotide--dimethylbenzimidazole phosphoribosyltransferase from Pseudomonas putida (strain ATCC 700007 / DSM 6899 / JCM 31910 / BCRC 17059 / LMG 24140 / F1).